A 207-amino-acid chain; its full sequence is MHIRHLGLVDYEPTWHAMQAFTETRTGETPDELWIVEHPPVYTLGLAGKPEHLLQQTAIPLVKTDRGGQITYHGPGQLVVYLLMDLRRRDYGVRDMVRRIEQAIIDTLADYGIEARGDVNAPGVYVGARKIASLGLRIKNHATYHGLSLNVSMDLAPFGWINPCGYAGLEVTRMTDLGVEATLAQVAERLIPHLETRLARPQHETEA.

The region spanning glycine 27 to glutamine 202 is the BPL/LPL catalytic domain. Residues arginine 66 to histidine 73, serine 133 to glycine 135, and glycine 146 to serine 148 each bind substrate. Cysteine 164 serves as the catalytic Acyl-thioester intermediate.

The protein belongs to the LipB family.

It is found in the cytoplasm. The enzyme catalyses octanoyl-[ACP] + L-lysyl-[protein] = N(6)-octanoyl-L-lysyl-[protein] + holo-[ACP] + H(+). It participates in protein modification; protein lipoylation via endogenous pathway; protein N(6)-(lipoyl)lysine from octanoyl-[acyl-carrier-protein]: step 1/2. Catalyzes the transfer of endogenously produced octanoic acid from octanoyl-acyl-carrier-protein onto the lipoyl domains of lipoate-dependent enzymes. Lipoyl-ACP can also act as a substrate although octanoyl-ACP is likely to be the physiological substrate. In Laribacter hongkongensis (strain HLHK9), this protein is Octanoyltransferase.